A 519-amino-acid chain; its full sequence is Ribonuclease Y (519 aa).

Residues 3-23 (LLSLLLILLGIILGVVVGYIV) traverse the membrane as a helical segment. One can recognise a KH domain in the interval 209 to 269 (TVSVVNLPND…IRREIARTAL (61 aa)). The region spanning 335 to 428 (VLKHSIEVAH…VAAADALSAA (94 aa)) is the HD domain.

This sequence belongs to the RNase Y family.

The protein localises to the cell membrane. Functionally, endoribonuclease that initiates mRNA decay. This Staphylococcus epidermidis (strain ATCC 35984 / DSM 28319 / BCRC 17069 / CCUG 31568 / BM 3577 / RP62A) protein is Ribonuclease Y.